The chain runs to 213 residues: 3-dehydroquinate dehydratase (213 aa).

3-dehydroquinate-binding positions include Glu-27 to Arg-29 and Arg-53. His-111 (proton donor/acceptor) is an active-site residue. The active-site Schiff-base intermediate with substrate is the Lys-138. Residues Arg-175 and Gln-197 each contribute to the 3-dehydroquinate site.

It belongs to the type-I 3-dehydroquinase family. As to quaternary structure, homodimer.

It carries out the reaction 3-dehydroquinate = 3-dehydroshikimate + H2O. It functions in the pathway metabolic intermediate biosynthesis; chorismate biosynthesis; chorismate from D-erythrose 4-phosphate and phosphoenolpyruvate: step 3/7. Its function is as follows. Involved in the third step of the chorismate pathway, which leads to the biosynthesis of aromatic amino acids. Catalyzes the cis-dehydration of 3-dehydroquinate (DHQ) and introduces the first double bond of the aromatic ring to yield 3-dehydroshikimate. This chain is 3-dehydroquinate dehydratase, found in Thermococcus gammatolerans (strain DSM 15229 / JCM 11827 / EJ3).